The chain runs to 412 residues: Dihydrolipoyllysine-residue acetyltransferase component of pyruvate dehydrogenase complex (412 aa).

In terms of domain architecture, Lipoyl-binding spans 2–78; sequence PIKILMPALS…PVNSLIAVLS (77 aa). K43 is subject to N6-lipoyllysine. The Peripheral subunit-binding (PSBD) domain occupies 132-169; that stretch reads FASPLAKRLAKMRNIRFESVKGSGPHGRIVKQDILSYT. H385 is a catalytic residue.

This sequence belongs to the 2-oxoacid dehydrogenase family. Forms a 24-polypeptide structural core with octahedral symmetry. The cofactor is (R)-lipoate.

The enzyme catalyses N(6)-[(R)-dihydrolipoyl]-L-lysyl-[protein] + acetyl-CoA = N(6)-[(R)-S(8)-acetyldihydrolipoyl]-L-lysyl-[protein] + CoA. The pyruvate dehydrogenase complex catalyzes the overall conversion of pyruvate to acetyl-CoA and CO(2). It contains multiple copies of three enzymatic components: pyruvate dehydrogenase (E1), dihydrolipoamide acetyltransferase (E2) and lipoamide dehydrogenase (E3). The polypeptide is Dihydrolipoyllysine-residue acetyltransferase component of pyruvate dehydrogenase complex (pdhC) (Rickettsia conorii (strain ATCC VR-613 / Malish 7)).